Here is a 359-residue protein sequence, read N- to C-terminus: UPF0284 protein MTH_1426 (359 aa).

The protein belongs to the UPF0284 family.

The chain is UPF0284 protein MTH_1426 from Methanothermobacter thermautotrophicus (strain ATCC 29096 / DSM 1053 / JCM 10044 / NBRC 100330 / Delta H) (Methanobacterium thermoautotrophicum).